We begin with the raw amino-acid sequence, 122 residues long: EPIDERMAL PATTERNING FACTOR-like protein 1 (122 aa).

The first 26 residues, 1-26, serve as a signal peptide directing secretion; that stretch reads MFAIYKSTLLLLPLILILLITPQVSS. Cystine bridges form between C55/C113, C59/C65, and C62/C115.

Belongs to the plant cysteine rich small secretory peptide family. Epidermal patterning factor subfamily.

The protein resides in the secreted. Functionally, controls stomatal patterning. The protein is EPIDERMAL PATTERNING FACTOR-like protein 1 of Arabidopsis thaliana (Mouse-ear cress).